The primary structure comprises 155 residues: MRPRITVVAPSRIKPLEIPEFTTIWQFKDIDISHFLDLARGQCRADKVVEALSNGVKSPTVYVLDCDGYYPGLNFVFGLAVPVLKTAVVFTARLVGPRFEERLVKEITHEAGHLYGLAHCANPSCVMYFSNSLLDTDRKSPYFCPKCRENLARIL.

H109 is a Zn(2+) binding site. The Proton acceptor role is filled by E110. Positions 113, 119, 120, 125, 144, and 147 each coordinate Zn(2+).

The protein belongs to the peptidase M54 family. Monomer. The cofactor is Zn(2+).

In terms of biological role, probable zinc metalloprotease whose natural substrate is unknown. This chain is Archaemetzincin, found in Pyrobaculum aerophilum (strain ATCC 51768 / DSM 7523 / JCM 9630 / CIP 104966 / NBRC 100827 / IM2).